Reading from the N-terminus, the 545-residue chain is Ribosomal protein uS12 methylthiotransferase RimO (545 aa).

The region spanning 7–129 (RRVALVTLGC…IGEHLDAVLG (123 aa)) is the MTTase N-terminal domain. Residues Cys-16, Cys-52, Cys-92, Cys-197, Cys-201, and Cys-204 each contribute to the [4Fe-4S] cluster site. Residues 183–414 (LTAGPVAALK…DLVEQLTATR (232 aa)) enclose the Radical SAM core domain. Residues 416–510 (QERIGSRVQV…GVDLVAEFTA (95 aa)) form the TRAM domain. Disordered stretches follow at residues 454–486 (LPGP…QPGV) and 516–545 (RPSA…ADGT). A compositionally biased stretch (low complexity) spans 455–464 (PGPAGAAAGP).

It belongs to the methylthiotransferase family. RimO subfamily. It depends on [4Fe-4S] cluster as a cofactor.

It localises to the cytoplasm. The enzyme catalyses L-aspartate(89)-[ribosomal protein uS12]-hydrogen + (sulfur carrier)-SH + AH2 + 2 S-adenosyl-L-methionine = 3-methylsulfanyl-L-aspartate(89)-[ribosomal protein uS12]-hydrogen + (sulfur carrier)-H + 5'-deoxyadenosine + L-methionine + A + S-adenosyl-L-homocysteine + 2 H(+). Functionally, catalyzes the methylthiolation of an aspartic acid residue of ribosomal protein uS12. The polypeptide is Ribosomal protein uS12 methylthiotransferase RimO (Frankia alni (strain DSM 45986 / CECT 9034 / ACN14a)).